A 252-amino-acid chain; its full sequence is Probable S-methyl-5'-thioinosine phosphorylase (252 aa).

Residues Thr8 and 44-45 contribute to the phosphate site; that span reads RH. Position 173 (Met173) interacts with substrate. A phosphate-binding site is contributed by Thr174. 197 to 199 provides a ligand contact to substrate; the sequence is NYA.

The protein belongs to the PNP/MTAP phosphorylase family. MTAP subfamily. As to quaternary structure, homotrimer.

The enzyme catalyses S-methyl-5'-thioinosine + phosphate = 5-(methylsulfanyl)-alpha-D-ribose 1-phosphate + hypoxanthine. The protein operates within purine metabolism; purine nucleoside salvage. Functionally, catalyzes the reversible phosphorylation of S-methyl-5'-thioinosine (MTI) to hypoxanthine and 5-methylthioribose-1-phosphate. Involved in the breakdown of S-methyl-5'-thioadenosine (MTA), a major by-product of polyamine biosynthesis. Catabolism of (MTA) occurs via deamination to MTI and phosphorolysis to hypoxanthine. The chain is Probable S-methyl-5'-thioinosine phosphorylase from Methanocaldococcus jannaschii (strain ATCC 43067 / DSM 2661 / JAL-1 / JCM 10045 / NBRC 100440) (Methanococcus jannaschii).